We begin with the raw amino-acid sequence, 258 residues long: Short-chain dehydrogenase/reductase FrzI (258 aa).

NADP(+) contacts are provided by isoleucine 21, asparagine 41, and asparagine 94. Active-site proton donor residues include serine 143 and serine 144. Positions 157, 161, 191, and 193 each coordinate NADP(+). The active-site Proton acceptor is the tyrosine 157. Residue lysine 161 is the Lowers pKa of active site Tyr of the active site.

The protein belongs to the short-chain dehydrogenases/reductases (SDR) family.

It catalyses the reaction (1S,3S,6S,7S,8R)-7-hydroxy-6-[(4-methoxyphenyl)methyl]-3-(methylamino)-5-azatricyclo[6.3.1.0(1,5)]dodecan-9-one + NADPH + H(+) = (1S,3S,6S,7S,8S,9S)-6-[(4-methoxyphenyl)methyl]-3-(methylamino)-5-azatricyclo[6.3.1.0(1,5)]dodecane-7,9-diol + NADP(+). It functions in the pathway secondary metabolite biosynthesis. In terms of biological role, short-chain dehydrogenase/reductase; part of the gene cluster that mediates the biosynthesis of the alkaloid (-)-FR901483, a potent immunosuppressant that shows efficacy in animal models and a probable inhibitor of purine nucleotide biosynthesis by targeting phosphoribosylpyrophosphate amidotransferase (PPAT). Within the pathway, FrzI catalyzes the formation of dephospho-(-)-FR901483 from the aza-tricyclic intermediate produced by FrzH. The biosynthesis of (-)-FR901483 starts with the condensation of two L-tyrosines to yield (S,S)-dityrosyl-piperazine. This process occurs in 3 steps with the non-canonical nonribosomal peptide synthetase FrzA catalyzing the reduction of L-tyrosine into L-tyrosinal, the spontaneous condensation of 2 L-tyrosinal units, and the subsequent reduction by the NmrA-like family domain-containing oxidoreductase FrzB. The cytochrome P450 monooxygenase FrzC then performs coupling between N10 and C1' to morph the piperazine into a 1,4-diazabicyclo[3.2.1]octane spiro-fused to a 2,5-cyclohexadienone. The dienone portion is further reduced to cyclohexanone by the flavin-dependent reductase FrzD. The methyltranserases (MTs) FrzE and FrzF are then involved in the methylation at the C10' amine and the C4 phenolic oxygen, respectively. The order of the two MTs appear to be interchangeable. Cleavage of the C9-N10' bond by the dioxygenase FrzG then leads to formation of a conjugated iminium. In addition to the oxidation of C9, an additional dehydrogenation between C7 and C8 can occur to give a likely shunt product. The next biosynthetic step is the intramolecular aldol condensation catalyzed by the newly identified aldolase FrzH to yield an aza-tricyclic product with the formation of a C9-C3' bond. The short-chain dehydrogenase/reductase FrzI then produces dephospho-(-)-FR901483 that is phosphorylated at C4'-OH into (-)-FR901483 by the phosphotransferase FrzJ. The chain is Short-chain dehydrogenase/reductase FrzI from Cladobotryum sp.